The chain runs to 863 residues: Protein ARG5,6, mitochondrial (863 aa).

Residues 1-65 (MPSASLLVST…RYVSSTNGFS (65 aa)) constitute a mitochondrion transit peptide. The region spanning 353-505 (KLVKRSSIGE…NFVKSCDTAS (153 aa)) is the N-acetyltransferase domain. S359 is modified (phosphoserine). C675 is an active-site residue.

It in the N-terminal section; belongs to the acetylglutamate kinase family. In the C-terminal section; belongs to the NAGSA dehydrogenase family. Post-translationally, the protein precursor is cleaved into the two biologically active enzymes, the kinase and the reductase.

The protein localises to the mitochondrion. The catalysed reaction is N-acetyl-L-glutamate 5-semialdehyde + phosphate + NADP(+) = N-acetyl-L-glutamyl 5-phosphate + NADPH + H(+). The enzyme catalyses N-acetyl-L-glutamate + ATP = N-acetyl-L-glutamyl 5-phosphate + ADP. The protein operates within amino-acid biosynthesis; L-arginine biosynthesis; N(2)-acetyl-L-ornithine from L-glutamate: step 2/4. It participates in amino-acid biosynthesis; L-arginine biosynthesis; N(2)-acetyl-L-ornithine from L-glutamate: step 3/4. With respect to regulation, the kinase activity is inhibited by arginine. This is Protein ARG5,6, mitochondrial (ARG5,6) from Saccharomyces cerevisiae (strain ATCC 204508 / S288c) (Baker's yeast).